The sequence spans 147 residues: E3 ubiquitin-protein ligase RNF181 homolog (147 aa).

The RING-type; atypical zinc finger occupies 70-111 (CSVCKEPAEEGQKYRILPCKHEFHEECILLWLKKTNSCPLCR).

It belongs to the RNF181 family.

It carries out the reaction S-ubiquitinyl-[E2 ubiquitin-conjugating enzyme]-L-cysteine + [acceptor protein]-L-lysine = [E2 ubiquitin-conjugating enzyme]-L-cysteine + N(6)-ubiquitinyl-[acceptor protein]-L-lysine.. It functions in the pathway protein modification; protein ubiquitination. E3 ubiquitin-protein ligase which accepts ubiquitin from an E2 ubiquitin-conjugating enzyme in the form of a thioester and then directly transfers the ubiquitin to targeted substrates. The chain is E3 ubiquitin-protein ligase RNF181 homolog from Drosophila melanogaster (Fruit fly).